Consider the following 138-residue polypeptide: Phosphoribosyl-AMP cyclohydrolase (138 aa).

Asp84 lines the Mg(2+) pocket. Cys85 provides a ligand contact to Zn(2+). Positions 86 and 88 each coordinate Mg(2+). Zn(2+) is bound by residues Cys102 and Cys109.

The protein belongs to the PRA-CH family. As to quaternary structure, homodimer. Requires Mg(2+) as cofactor. Zn(2+) is required as a cofactor.

The protein localises to the cytoplasm. The catalysed reaction is 1-(5-phospho-beta-D-ribosyl)-5'-AMP + H2O = 1-(5-phospho-beta-D-ribosyl)-5-[(5-phospho-beta-D-ribosylamino)methylideneamino]imidazole-4-carboxamide. Its pathway is amino-acid biosynthesis; L-histidine biosynthesis; L-histidine from 5-phospho-alpha-D-ribose 1-diphosphate: step 3/9. Functionally, catalyzes the hydrolysis of the adenine ring of phosphoribosyl-AMP. The chain is Phosphoribosyl-AMP cyclohydrolase from Burkholderia multivorans (strain ATCC 17616 / 249).